Consider the following 156-residue polypeptide: MQQSQRGCGQNSYGQSGYRQRGFTLLEIMVVIVILGVLASLVVPNLMGNKEKADRQKAVSDIVSLESALDMYKLDNNRYPSTEQGLKALVTKPTVQPEPRNYPADGYIRRLPQDPWGTDYQLLNPGQHGKLDIFSLGPDGMPGTEDDIGNWNLDKK.

A propeptide spans 1 to 22 (MQQSQRGCGQNSYGQSGYRQRG) (leader sequence). An N-methylphenylalanine modification is found at Phe-23. A helical transmembrane segment spans residues 23 to 43 (FTLLEIMVVIVILGVLASLVV).

The protein belongs to the GSP G family. In terms of assembly, type II secretion system is composed of four main components: the outer membrane complex, the inner membrane complex, the cytoplasmic secretion ATPase and the periplasm-spanning pseudopilus. Forms homomultimers. Post-translationally, cleaved by the prepilin peptidase. Methylated by prepilin peptidase at the amino group of the N-terminal phenylalanine once the leader sequence is cleaved.

The protein localises to the cell inner membrane. In terms of biological role, core component of the type II secretion system required for the energy-dependent secretion of extracellular factors such as proteases and toxins from the periplasm. Pseudopilin (pilin-like) protein that polymerizes to form the pseudopilus. Further polymerization triggers pseudopilus growth. This chain is Type II secretion system core protein G (outG), found in Pectobacterium carotovorum subsp. carotovorum (Erwinia carotovora subsp. carotovora).